The chain runs to 893 residues: Alanine--tRNA ligase (893 aa).

4 residues coordinate Zn(2+): His-573, His-577, Cys-676, and His-680. The tract at residues 853–872 (LGGGGGGKDDLAQGGGQDPS) is disordered.

Belongs to the class-II aminoacyl-tRNA synthetase family. It depends on Zn(2+) as a cofactor.

The protein localises to the cytoplasm. The catalysed reaction is tRNA(Ala) + L-alanine + ATP = L-alanyl-tRNA(Ala) + AMP + diphosphate. Its function is as follows. Catalyzes the attachment of alanine to tRNA(Ala) in a two-step reaction: alanine is first activated by ATP to form Ala-AMP and then transferred to the acceptor end of tRNA(Ala). Also edits incorrectly charged Ser-tRNA(Ala) and Gly-tRNA(Ala) via its editing domain. The polypeptide is Alanine--tRNA ligase (Kineococcus radiotolerans (strain ATCC BAA-149 / DSM 14245 / SRS30216)).